The following is a 183-amino-acid chain: Translation initiation factor IF-3 (183 aa).

Belongs to the IF-3 family. As to quaternary structure, monomer.

The protein localises to the cytoplasm. Its function is as follows. IF-3 binds to the 30S ribosomal subunit and shifts the equilibrium between 70S ribosomes and their 50S and 30S subunits in favor of the free subunits, thus enhancing the availability of 30S subunits on which protein synthesis initiation begins. The protein is Translation initiation factor IF-3 of Pseudomonas putida (strain W619).